Reading from the N-terminus, the 240-residue chain is UDP-2,3-diacylglucosamine hydrolase (240 aa).

Residues Asp-8, His-10, Asp-41, Asn-79, and His-114 each contribute to the Mn(2+) site. Residue 79–80 (NR) participates in substrate binding. Positions 122, 160, 164, 167, and 195 each coordinate substrate. Residues His-195 and His-197 each coordinate Mn(2+).

This sequence belongs to the LpxH family. The cofactor is Mn(2+).

Its subcellular location is the cell inner membrane. It catalyses the reaction UDP-2-N,3-O-bis[(3R)-3-hydroxytetradecanoyl]-alpha-D-glucosamine + H2O = 2-N,3-O-bis[(3R)-3-hydroxytetradecanoyl]-alpha-D-glucosaminyl 1-phosphate + UMP + 2 H(+). It participates in glycolipid biosynthesis; lipid IV(A) biosynthesis; lipid IV(A) from (3R)-3-hydroxytetradecanoyl-[acyl-carrier-protein] and UDP-N-acetyl-alpha-D-glucosamine: step 4/6. Its function is as follows. Hydrolyzes the pyrophosphate bond of UDP-2,3-diacylglucosamine to yield 2,3-diacylglucosamine 1-phosphate (lipid X) and UMP by catalyzing the attack of water at the alpha-P atom. Involved in the biosynthesis of lipid A, a phosphorylated glycolipid that anchors the lipopolysaccharide to the outer membrane of the cell. The sequence is that of UDP-2,3-diacylglucosamine hydrolase from Salmonella schwarzengrund (strain CVM19633).